Here is a 399-residue protein sequence, read N- to C-terminus: Elongation factor Tu (399 aa).

Residues 10-204 (KPHVNIGTIG…AVDASIPEPE (195 aa)) form the tr-type G domain. The tract at residues 19 to 26 (GHVDHGKT) is G1. 19–26 (GHVDHGKT) contacts GTP. Threonine 26 contacts Mg(2+). Residues 60–64 (GITIN) form a G2 region. Residues 81-84 (DCPG) are G3. Residues 81 to 85 (DCPGH) and 136 to 139 (NKCD) contribute to the GTP site. The G4 stretch occupies residues 136-139 (NKCD). The tract at residues 174–176 (SGL) is G5.

The protein belongs to the TRAFAC class translation factor GTPase superfamily. Classic translation factor GTPase family. EF-Tu/EF-1A subfamily. In terms of assembly, monomer.

The protein localises to the cytoplasm. It catalyses the reaction GTP + H2O = GDP + phosphate + H(+). Its function is as follows. GTP hydrolase that promotes the GTP-dependent binding of aminoacyl-tRNA to the A-site of ribosomes during protein biosynthesis. The sequence is that of Elongation factor Tu from Prochlorococcus marinus (strain SARG / CCMP1375 / SS120).